We begin with the raw amino-acid sequence, 558 residues long: Oxygen-dependent choline dehydrogenase (558 aa).

Position 4 to 33 (Asp-4 to Glu-33) interacts with FAD. His-473 functions as the Proton acceptor in the catalytic mechanism.

It belongs to the GMC oxidoreductase family. Requires FAD as cofactor.

It carries out the reaction choline + A = betaine aldehyde + AH2. It catalyses the reaction betaine aldehyde + NAD(+) + H2O = glycine betaine + NADH + 2 H(+). Its pathway is amine and polyamine biosynthesis; betaine biosynthesis via choline pathway; betaine aldehyde from choline (cytochrome c reductase route): step 1/1. In terms of biological role, involved in the biosynthesis of the osmoprotectant glycine betaine. Catalyzes the oxidation of choline to betaine aldehyde and betaine aldehyde to glycine betaine at the same rate. The sequence is that of Oxygen-dependent choline dehydrogenase from Citrobacter koseri (strain ATCC BAA-895 / CDC 4225-83 / SGSC4696).